Consider the following 266-residue polypeptide: Undecaprenyl-diphosphatase (266 aa).

The next 8 membrane-spanning stretches (helical) occupy residues 1-21, 39-59, 87-107, 117-137, 153-173, 189-209, 216-236, and 246-266; these read MEFF…FIPI, PGSS…FWYF, IFIG…FVPG, LSIA…DIST, YIGI…GATI, FSFL…FFSA, FPFL…LLAI, and HGLK…LFNL.

The protein belongs to the UppP family.

It is found in the cell inner membrane. The catalysed reaction is di-trans,octa-cis-undecaprenyl diphosphate + H2O = di-trans,octa-cis-undecaprenyl phosphate + phosphate + H(+). Catalyzes the dephosphorylation of undecaprenyl diphosphate (UPP). Confers resistance to bacitracin. The sequence is that of Undecaprenyl-diphosphatase from Prochlorococcus marinus subsp. pastoris (strain CCMP1986 / NIES-2087 / MED4).